The chain runs to 568 residues: Tetratricopeptide repeat protein 22 (568 aa).

7 TPR repeats span residues 66–99, 101–133, 155–190, 203–237, 260–294, 296–328, and 432–465; these read PAVR…DPGN, NAWA…MGLE, YAHG…GQQI, ATLF…LGEV, KDTF…AKNQ, PILN…LTDP, and PELQ…DDEG.

The polypeptide is Tetratricopeptide repeat protein 22 (Ttc22) (Mus musculus (Mouse)).